A 105-amino-acid polypeptide reads, in one-letter code: Meiotically up-regulated gene 52 protein (105 aa).

In terms of biological role, has a role in meiosis. This is Meiotically up-regulated gene 52 protein (mug52) from Schizosaccharomyces pombe (strain 972 / ATCC 24843) (Fission yeast).